We begin with the raw amino-acid sequence, 34 residues long: Stromal 70 kDa heat shock-related protein, chloroplastic (34 aa).

It belongs to the heat shock protein 70 family.

It localises to the plastid. It is found in the chloroplast stroma. Interacts with newly imported chloroplast proteins to assist in their maturation. This is Stromal 70 kDa heat shock-related protein, chloroplastic from Cucurbita maxima (Pumpkin).